The sequence spans 579 residues: Adipocyte plasma membrane-associated protein Hemomucin (579 aa).

The Cytoplasmic segment spans residues 1–6; sequence MGLLYA. A helical membrane pass occupies residues 7–29; the sequence is LRVRIMNFMIFFLLIILMPGLPP. At 30-579 the chain is on the extracellular side; that stretch reads RTTFPFKDYI…INKQGVNVEL (550 aa). N-linked (GlcNAc...) asparagine glycosylation is found at asparagine 213 and asparagine 217. The interval 427–579 is disordered; the sequence is GLEASIGVPP…INKQGVNVEL (153 aa). Residues 435–529 show a composition bias toward low complexity; it reads PPSKATPKPK…PKPTTTTTPT (95 aa).

The protein belongs to the strictosidine synthase family. In terms of assembly, interacts with sturkopf. Post-translationally, O-glycosylated. Glycosylated in the ovary of 4 day old females. Phosphorylated. In terms of tissue distribution, detected in ovaries (at protein level). In larvae, detected in the fat body, salivary glands, imaginal disks and gut (at protein level). In adults, expressed in the cardia, and in regions of the ventriculus including the area posterior to the cardia. In females also expressed in follicle cells.

It localises to the cell membrane. Transmembrane mucin that may be involved in cellular adhesion and the innate immune response. Membrane-tethered mucins are involved in many cell surface functions and form a physical barrier around cells to regulate cell-cell and/or cell-substrate interactions, and protect against pathogens or harmful extracellular conditions. This mucin likely acts in hemocyte adhesion as it is released from hemocytes during coagulation and is also able to bind lipophorin particles which form part of the hemocyte coagulogen. Able to induce expression of the antibacterial proteins in the presence of GalNAc-specific lectins and so probably also functions in the innate immune response. The polypeptide is Adipocyte plasma membrane-associated protein Hemomucin (Drosophila melanogaster (Fruit fly)).